Here is a 486-residue protein sequence, read N- to C-terminus: Aspartyl/glutamyl-tRNA(Asn/Gln) amidotransferase subunit B (486 aa).

Belongs to the GatB/GatE family. GatB subfamily. As to quaternary structure, heterotrimer of A, B and C subunits.

The catalysed reaction is L-glutamyl-tRNA(Gln) + L-glutamine + ATP + H2O = L-glutaminyl-tRNA(Gln) + L-glutamate + ADP + phosphate + H(+). The enzyme catalyses L-aspartyl-tRNA(Asn) + L-glutamine + ATP + H2O = L-asparaginyl-tRNA(Asn) + L-glutamate + ADP + phosphate + 2 H(+). Its function is as follows. Allows the formation of correctly charged Asn-tRNA(Asn) or Gln-tRNA(Gln) through the transamidation of misacylated Asp-tRNA(Asn) or Glu-tRNA(Gln) in organisms which lack either or both of asparaginyl-tRNA or glutaminyl-tRNA synthetases. The reaction takes place in the presence of glutamine and ATP through an activated phospho-Asp-tRNA(Asn) or phospho-Glu-tRNA(Gln). The protein is Aspartyl/glutamyl-tRNA(Asn/Gln) amidotransferase subunit B of Herminiimonas arsenicoxydans.